Here is a 351-residue protein sequence, read N- to C-terminus: uncharacterized protein (351 aa).

Zn(2+) contacts are provided by His23, His25, Lys151, His184, His212, and Asp270. N6-carboxylysine is present on Lys151.

It belongs to the metallo-dependent hydrolases superfamily. Phosphotriesterase family. It depends on Zn(2+) as a cofactor.

This is an uncharacterized protein from Mycoplasma pneumoniae (strain ATCC 29342 / M129 / Subtype 1) (Mycoplasmoides pneumoniae).